Reading from the N-terminus, the 466-residue chain is Asparagine--tRNA ligase (466 aa).

Belongs to the class-II aminoacyl-tRNA synthetase family. In terms of assembly, homodimer.

The protein resides in the cytoplasm. The catalysed reaction is tRNA(Asn) + L-asparagine + ATP = L-asparaginyl-tRNA(Asn) + AMP + diphosphate + H(+). The chain is Asparagine--tRNA ligase from Idiomarina loihiensis (strain ATCC BAA-735 / DSM 15497 / L2-TR).